A 663-amino-acid polypeptide reads, in one-letter code: DNA ligase (663 aa).

NAD(+)-binding positions include 33–37 (DQEFD), 82–83 (SL), and glutamate 113. Lysine 115 functions as the N6-AMP-lysine intermediate in the catalytic mechanism. Arginine 136, glutamate 170, lysine 286, and lysine 310 together coordinate NAD(+). The Zn(2+) site is built by cysteine 404, cysteine 407, cysteine 422, and cysteine 427. In terms of domain architecture, BRCT spans 587–663 (SSDPSLTGKL…IEESDLEDFL (77 aa)).

It belongs to the NAD-dependent DNA ligase family. LigA subfamily. Mg(2+) is required as a cofactor. Mn(2+) serves as cofactor.

The catalysed reaction is NAD(+) + (deoxyribonucleotide)n-3'-hydroxyl + 5'-phospho-(deoxyribonucleotide)m = (deoxyribonucleotide)n+m + AMP + beta-nicotinamide D-nucleotide.. Functionally, DNA ligase that catalyzes the formation of phosphodiester linkages between 5'-phosphoryl and 3'-hydroxyl groups in double-stranded DNA using NAD as a coenzyme and as the energy source for the reaction. It is essential for DNA replication and repair of damaged DNA. The sequence is that of DNA ligase from Natranaerobius thermophilus (strain ATCC BAA-1301 / DSM 18059 / JW/NM-WN-LF).